The primary structure comprises 54 residues: ATP synthase protein 8 (54 aa).

Residues 13–32 (ITFTFVIITLMVYILSKYIL) traverse the membrane as a helical segment.

It belongs to the ATPase protein 8 family. F-type ATPases have 2 components, CF(1) - the catalytic core - and CF(0) - the membrane proton channel.

The protein localises to the mitochondrion membrane. Functionally, mitochondrial membrane ATP synthase (F(1)F(0) ATP synthase or Complex V) produces ATP from ADP in the presence of a proton gradient across the membrane which is generated by electron transport complexes of the respiratory chain. F-type ATPases consist of two structural domains, F(1) - containing the extramembraneous catalytic core and F(0) - containing the membrane proton channel, linked together by a central stalk and a peripheral stalk. During catalysis, ATP synthesis in the catalytic domain of F(1) is coupled via a rotary mechanism of the central stalk subunits to proton translocation. Part of the complex F(0) domain. Minor subunit located with subunit a in the membrane. The protein is ATP synthase protein 8 (atp-8) of Neurospora crassa (strain ATCC 24698 / 74-OR23-1A / CBS 708.71 / DSM 1257 / FGSC 987).